Consider the following 75-residue polypeptide: Small integral membrane protein 15 (75 aa).

The helical transmembrane segment at 21–41 (YGFLITVLLALTPLFLASAVL) threads the bilayer. A coiled-coil region spans residues 49–75 (IEAKERDQKKKQKRQENIAKAKRTKKD). Residues 52–67 (KERDQKKKQKRQENIA) are compositionally biased toward basic and acidic residues. Positions 52 to 75 (KERDQKKKQKRQENIAKAKRTKKD) are disordered.

Belongs to the SMIM15 family.

The protein resides in the membrane. The chain is Small integral membrane protein 15 (smim15) from Xenopus laevis (African clawed frog).